The primary structure comprises 227 residues: Cytidylate kinase (227 aa).

12–20 (GPGGAGKGT) is a binding site for ATP.

This sequence belongs to the cytidylate kinase family. Type 1 subfamily.

The protein localises to the cytoplasm. It carries out the reaction CMP + ATP = CDP + ADP. The catalysed reaction is dCMP + ATP = dCDP + ADP. The sequence is that of Cytidylate kinase from Klebsiella pneumoniae (strain 342).